A 556-amino-acid polypeptide reads, in one-letter code: 2-isopropylmalate synthase (556 aa).

The Pyruvate carboxyltransferase domain occupies 33–307 (PIWCSSDLRD…HPQLDFSDID (275 aa)). 4 residues coordinate Mg(2+): D42, H246, H248, and N282. Residues 439–556 (ATSPYVLASH…AVTQAEAKAA (118 aa)) form a regulatory domain region.

Belongs to the alpha-IPM synthase/homocitrate synthase family. LeuA type 2 subfamily. In terms of assembly, homodimer. Mg(2+) is required as a cofactor.

Its subcellular location is the cytoplasm. It catalyses the reaction 3-methyl-2-oxobutanoate + acetyl-CoA + H2O = (2S)-2-isopropylmalate + CoA + H(+). It functions in the pathway amino-acid biosynthesis; L-leucine biosynthesis; L-leucine from 3-methyl-2-oxobutanoate: step 1/4. Functionally, catalyzes the condensation of the acetyl group of acetyl-CoA with 3-methyl-2-oxobutanoate (2-ketoisovalerate) to form 3-carboxy-3-hydroxy-4-methylpentanoate (2-isopropylmalate). The sequence is that of 2-isopropylmalate synthase from Pseudomonas aeruginosa (strain ATCC 15692 / DSM 22644 / CIP 104116 / JCM 14847 / LMG 12228 / 1C / PRS 101 / PAO1).